A 142-amino-acid chain; its full sequence is ATP synthase epsilon chain (142 aa).

The protein belongs to the ATPase epsilon chain family. F-type ATPases have 2 components, CF(1) - the catalytic core - and CF(0) - the membrane proton channel. CF(1) has five subunits: alpha(3), beta(3), gamma(1), delta(1), epsilon(1). CF(0) has three main subunits: a, b and c.

It is found in the cell inner membrane. Its function is as follows. Produces ATP from ADP in the presence of a proton gradient across the membrane. This chain is ATP synthase epsilon chain, found in Shewanella baltica (strain OS185).